The sequence spans 471 residues: UDP-glycosyltransferase CGT (471 aa).

Residue histidine 24 is the Proton acceptor of the active site. Histidine 24 is an an anthocyanidin binding site. Residue aspartate 120 is the Charge relay of the active site. Threonine 143 lines the UDP-alpha-D-glucose pocket. The interval 280 to 281 (SR) is UDP. The UDP-alpha-D-glucose site is built by valine 343, glutamine 345, histidine 360, tryptophan 363, asparagine 364, serine 365, and glutamate 368. An an anthocyanidin-binding site is contributed by glycine 383. UDP-alpha-D-glucose is bound by residues aspartate 384 and glutamine 385.

Belongs to the UDP-glycosyltransferase family.

It carries out the reaction a 3'-hydro-2'-hydroxy-beta-oxodihydrochalcone + UDP-alpha-D-glucose = a 3'-(beta-D-glucopyranosyl)-2'-hydroxy-beta-oxodihydrochalcone + UDP + H(+). Functionally, UDP-glucose-dependent glucosyltransferase catalyzing the c-glucosylation of 2-hydroxyflavanones. The protein is UDP-glycosyltransferase CGT of Oryza sativa subsp. japonica (Rice).